The chain runs to 30 residues: Dermaseptin-3.4TR (30 aa).

As to expression, expressed by the skin glands.

The protein localises to the secreted. In terms of biological role, has antimicrobial activity. The sequence is that of Dermaseptin-3.4TR from Phyllomedusa trinitatis (Trinidad leaf frog).